A 457-amino-acid chain; its full sequence is Argininosuccinate lyase (457 aa).

It belongs to the lyase 1 family. Argininosuccinate lyase subfamily.

It localises to the cytoplasm. The catalysed reaction is 2-(N(omega)-L-arginino)succinate = fumarate + L-arginine. The protein operates within amino-acid biosynthesis; L-arginine biosynthesis; L-arginine from L-ornithine and carbamoyl phosphate: step 3/3. This is Argininosuccinate lyase from Haemophilus influenzae (strain ATCC 51907 / DSM 11121 / KW20 / Rd).